Consider the following 248-residue polypeptide: Large ribosomal subunit protein uL30B (248 aa).

Residues Met-1 to Thr-45 are disordered. Over residues Ile-8–Ala-41 the composition is skewed to basic and acidic residues.

The protein belongs to the universal ribosomal protein uL30 family.

Its function is as follows. Binds to G-rich structures in 28S rRNA and in mRNAs. Plays a regulatory role in the translation apparatus; inhibits cell-free translation of mRNAs. The sequence is that of Large ribosomal subunit protein uL30B (Rpl7-2) from Paramecium tetraurelia.